We begin with the raw amino-acid sequence, 273 residues long: Glutamate 5-kinase (273 aa).

ATP is bound at residue Lys15. Positions 55, 142, and 158 each coordinate substrate. ATP-binding positions include 178–179 (SD) and 220–226 (TGGMLSK).

Belongs to the glutamate 5-kinase family.

Its subcellular location is the cytoplasm. It catalyses the reaction L-glutamate + ATP = L-glutamyl 5-phosphate + ADP. It functions in the pathway amino-acid biosynthesis; L-proline biosynthesis; L-glutamate 5-semialdehyde from L-glutamate: step 1/2. Functionally, catalyzes the transfer of a phosphate group to glutamate to form L-glutamate 5-phosphate. The protein is Glutamate 5-kinase of Streptococcus pyogenes serotype M49 (strain NZ131).